The primary structure comprises 309 residues: Dicarboxylate carrier UCP2 (309 aa).

The Mitochondrial intermembrane segment spans residues 1–16; the sequence is MVGFKATDVPPTATVK. 3 Solcar repeats span residues 11–106, 114–203, and 212–297; these read PTAT…VKQF, AGIG…IKDT, and DDLP…LKRA. Positions 16-63 are important for interaction with long-chain fatty acids; sequence KFLGAGTAACIADLITFPLDTAKVRLQIQGESQGLVRTAASAQYRGVL. A helical transmembrane segment spans residues 17-40; it reads FLGAGTAACIADLITFPLDTAKVR. The Mitochondrial matrix segment spans residues 41 to 77; it reads LQIQGESQGLVRTAASAQYRGVLGTILTMVRTEGPRS. The helical transmembrane segment at 78–103 threads the bilayer; it reads LYNGLVAGLQRQMSFASVRIGLYDSV. At 104–119 the chain is on the mitochondrial intermembrane side; the sequence is KQFYTKGSEHAGIGSR. A helical transmembrane segment spans residues 120–145; that stretch reads LLAGSTTGALAVAVAQPTDVVKVRFQ. The Mitochondrial matrix portion of the chain corresponds to 146 to 173; it reads AQARAGGGRRYQSTVEAYKTIAREEGIR. Residues 174 to 199 traverse the membrane as a helical segment; the sequence is GLWKGTSPNVARNAIVNCAELVTYDL. At 200-217 the chain is on the mitochondrial intermembrane side; sequence IKDTLLKANLMTDDLPCH. The helical transmembrane segment at 218–242 threads the bilayer; the sequence is FTSAFGAGFCTTVIASPVDVVKTRY. Residues 243 to 268 lie on the Mitochondrial matrix side of the membrane; that stretch reads MNSALGQYHSAGHCALTMLRKEGPRA. Residues 269–294 traverse the membrane as a helical segment; that stretch reads FYKGFMPSFLRLGSWNVVMFVTYEQL. Residues 278–285 form an important for interaction with long-chain fatty acids region; the sequence is LRLGSWNV. Topologically, residues 295–309 are mitochondrial intermembrane; the sequence is KRALMAAYQSREAPF.

This sequence belongs to the mitochondrial carrier (TC 2.A.29) family. In terms of assembly, homotetramer. Adopts an asymmetrical dimer of dimers functional form. Interacts with MICU1 (when methylated); leading to decrease the calcium sensitivity of MICU1. Widely expressed. Highest in spleen, lung, white and brown adipose tissues. 4-6 times higher levels are detected in white adipose tissue of ob/ob and db/db mice when compared to lean littermates. Expressed in neurons of the ventromedial nucleus of the hypothalamus (at protein level). Expressed in thymocytes (at protein level).

It is found in the mitochondrion inner membrane. It catalyses the reaction L-aspartate(out) + phosphate(in) + H(+)(in) = L-aspartate(in) + phosphate(out) + H(+)(out). It carries out the reaction oxaloacetate(out) + phosphate(in) + H(+)(in) = oxaloacetate(in) + phosphate(out) + H(+)(out). The enzyme catalyses (S)-malate(out) + phosphate(in) + H(+)(in) = (S)-malate(in) + phosphate(out) + H(+)(out). The catalysed reaction is malonate(out) + phosphate(in) + H(+)(in) = malonate(in) + phosphate(out) + H(+)(out). It catalyses the reaction sulfate(out) + phosphate(in) + H(+)(in) = sulfate(in) + phosphate(out) + H(+)(out). It carries out the reaction (S)-malate(out) = (S)-malate(in). The enzyme catalyses L-aspartate(out) = L-aspartate(in). The catalysed reaction is phosphate(in) = phosphate(out). It catalyses the reaction chloride(in) = chloride(out). It carries out the reaction H(+)(in) = H(+)(out). The enzyme catalyses a long-chain fatty acid(out) = a long-chain fatty acid(in). Proton conductance is activated by free long-chain fatty acids and allosterically inhibited by purine nucleotides. Could be constitutively inhibited by GDP. Its function is as follows. Antiporter that exports dicarboxylate intermediates of the Krebs cycle in exchange for phosphate plus a proton across the inner membrane of mitochondria, a process driven by mitochondrial motive force with an overall impact on glycolysis, glutaminolysis and glutathione-dependent redox balance. Continuous export of oxaloacetate and related four-carbon dicarboxylates from mitochondrial matrix into the cytosol negatively regulates the oxidation of acetyl-CoA substrates via the Krebs cycle lowering the ATP/ADP ratio and reactive oxygen species (ROS) production. May mediate inducible proton entry into the mitochondrial matrix affecting ATP turnover as a protection mechanism against oxidative stress. The proton currents are most likely associated with fatty acid flipping across the inner membrane of mitochondria in a metabolic process regulated by free fatty acids and purine nucleotides. Regulates the use of glucose as a source of energy. Required for glucose-induced DRP1-dependent mitochondrial fission and neuron activation in the ventromedial nucleus of the hypothalamus (VMH). This mitochondrial adaptation mechanism modulates the VMH pool of glucose-excited neurons with an impact on systemic glucose homeostasis. Regulates ROS levels and metabolic reprogramming of macrophages during the resolution phase of inflammation. Attenuates ROS production in response to IL33 to preserve the integrity of the Krebs cycle required for persistent production of itaconate and subsequent GATA3-dependent differentiation of inflammation-resolving alternatively activated macrophages. Can unidirectionally transport anions including L-malate, L-aspartate, phosphate and chloride ions. Does not mediate adaptive thermogenesis. The protein is Dicarboxylate carrier UCP2 (Ucp2) of Mus musculus (Mouse).